A 357-amino-acid polypeptide reads, in one-letter code: Transcription factor unc-86 (357 aa).

The short motif at R35 to I44 is the POU-IV box element. In terms of domain architecture, POU-specific spans D155–E232. The homeobox DNA-binding region spans K253 to F312.

Belongs to the POU transcription factor family. Class-4 subfamily. In terms of assembly, interacts with mec-3; the heterooligomer binds to the promoters of mec-3, mec-4 and mec-7. Specific to neurons and neuroblasts. Expressed in CEM head neurons and in IL2, URA, URB, URX and URY neurons. Not expressed in olfactory sensory neurons but expressed in AIZ interneurons.

The protein resides in the nucleus. Functionally, transcription factor required for correct cell fate determination and differentiation in diverse neuronal cell lineages where it plays a role in specifying the fate of daughter cells during cell divisions. Involved in sensory neuron production and function. Binds both alone and with mec-3 to the mec-3 promoter to initiate and maintain mec-3 expression which is required for sensory neuron differentiation. In addition, binds both alone and with mec-3 to the promoters of mec-4 and mec-7 which act to regulate sensory neuron function. Involved in determining the identity of the serotonergic NSM neurons and the cholinergic IL2 sensory and URA motor neurons. Promotes expression of the cfi-1 transcription factor in the URA and IL2 neurons which in turn activates normal URA and IL2 gene expression. Required to determine the identity of BDU sensory neurons in concert with transcription factor unc-86, regulating expression of a number of genes, including transcription factors ceh-14 and ahr-1, neuropeptides flp-10, nlp-1 and nlp-15, and tyramine receptor-encoding ser-2. Regulates expression of a number of genes in NSM neurons including bas-1, cat-1, dop-3, mgl-3, nlp-13, scd-2 and ptps-1. In the IL2 neurons, required for expression of cho-1, gcy-19, klp-6, lag-2, unc-5 and unc-17. Promotes expression of pkd-2 in the male-specific CEM head neurons. Required for dauer-specific branching of IL2Q neurons and nictation behavior. Controls both the timing and direction of axon outgrowth in HSN neurons. Plays a role in serotonin production by regulating expression of the tryptophan hydrolase tph-1 which catalyzes serotonin synthesis, in the AIM, NSM, HSN and RIH neurons. Involved in regulation of lin-11 expression in the AIZ interneurons, the major interneurons of the olfactory pathway, and is required for odortaxis behavior. Involved in neurite pruning between AIM neurons during larval development by regulating the expression of transcription factor mbr-1. Required for correct localization of unc-40. In Caenorhabditis elegans, this protein is Transcription factor unc-86 (unc-86).